Here is a 156-residue protein sequence, read N- to C-terminus: Small ribosomal subunit protein uS7 (156 aa).

It belongs to the universal ribosomal protein uS7 family. As to quaternary structure, part of the 30S ribosomal subunit. Contacts proteins S9 and S11.

Functionally, one of the primary rRNA binding proteins, it binds directly to 16S rRNA where it nucleates assembly of the head domain of the 30S subunit. Is located at the subunit interface close to the decoding center, probably blocks exit of the E-site tRNA. The sequence is that of Small ribosomal subunit protein uS7 from Geobacter sp. (strain M21).